A 130-amino-acid polypeptide reads, in one-letter code: Small ribosomal subunit protein uS11c (130 aa).

This sequence belongs to the universal ribosomal protein uS11 family. As to quaternary structure, part of the 30S ribosomal subunit.

It is found in the plastid. It localises to the chloroplast. This Angiopteris evecta (Mule's foot fern) protein is Small ribosomal subunit protein uS11c.